Here is a 294-residue protein sequence, read N- to C-terminus: NAD kinase (294 aa).

The active-site Proton acceptor is the aspartate 74. NAD(+)-binding positions include 74–75, arginine 79, 149–150, aspartate 179, 190–195, and alanine 214; these read DG, NE, and TGYSMS.

Belongs to the NAD kinase family. Requires a divalent metal cation as cofactor.

The protein localises to the cytoplasm. The enzyme catalyses NAD(+) + ATP = ADP + NADP(+) + H(+). Functionally, involved in the regulation of the intracellular balance of NAD and NADP, and is a key enzyme in the biosynthesis of NADP. Catalyzes specifically the phosphorylation on 2'-hydroxyl of the adenosine moiety of NAD to yield NADP. This Flavobacterium psychrophilum (strain ATCC 49511 / DSM 21280 / CIP 103535 / JIP02/86) protein is NAD kinase.